The sequence spans 151 residues: Linear element protein Mug20 (151 aa).

The stretch at 56 to 140 forms a coiled coil; sequence EEKLRALDKL…CAMEKLKMIE (85 aa).

As to quaternary structure, component of linear elements (LinEs), which are similar to synaptonemal complexes, at least composed of rec27, rec25, rec10 and mug20. Interacts with rec10.

The protein localises to the cytoplasm. Its subcellular location is the nucleus. It localises to the chromosome. In terms of biological role, during meiotic DNA recombination, binds to and may help activate DNA double-strand break (DSB) hotspot sites. This is Linear element protein Mug20 from Schizosaccharomyces pombe (strain 972 / ATCC 24843) (Fission yeast).